The following is a 542-amino-acid chain: Chaperonin GroEL 2 (542 aa).

ATP-binding positions include 30-33 (TLGP), K51, 87-91 (DGTTT), G415, and D496.

It belongs to the chaperonin (HSP60) family. In terms of assembly, forms a cylinder of 14 subunits composed of two heptameric rings stacked back-to-back. Interacts with the co-chaperonin GroES.

It localises to the cytoplasm. It catalyses the reaction ATP + H2O + a folded polypeptide = ADP + phosphate + an unfolded polypeptide.. Functionally, together with its co-chaperonin GroES, plays an essential role in assisting protein folding. The GroEL-GroES system forms a nano-cage that allows encapsulation of the non-native substrate proteins and provides a physical environment optimized to promote and accelerate protein folding. This Rhizobium etli (strain ATCC 51251 / DSM 11541 / JCM 21823 / NBRC 15573 / CFN 42) protein is Chaperonin GroEL 2.